The sequence spans 95 residues: Protein RALF-like 16 (95 aa).

The first 29 residues, 1–29, serve as a signal peptide directing secretion; sequence MVAYEKSPIVFLFATMMLVMFLFCGSGEA. 2 disulfide bridges follow: cysteine 45–cysteine 53 and cysteine 65–cysteine 71.

This sequence belongs to the plant rapid alkalinization factor (RALF) family.

It is found in the secreted. Its function is as follows. Cell signaling peptide that may regulate plant stress, growth, and development. Mediates a rapid alkalinization of extracellular space by mediating a transient increase in the cytoplasmic Ca(2+) concentration leading to a calcium-dependent signaling events through a cell surface receptor and a concomitant activation of some intracellular mitogen-activated protein kinases. The sequence is that of Protein RALF-like 16 (RALFL16) from Arabidopsis thaliana (Mouse-ear cress).